Here is a 785-residue protein sequence, read N- to C-terminus: Phenylalanine--tRNA ligase beta subunit (785 aa).

In terms of domain architecture, tRNA-binding spans 39-147; that stretch reads FPIPRGVVFA…DALPPGTPLS (109 aa). In terms of domain architecture, B5 spans 399 to 474; sequence KPPEAIPFRP…RIQGYETIPL (76 aa). Mg(2+)-binding residues include Asp452, Asp458, Glu461, and Glu462. Positions 688–780 constitute an FDX-ACB domain; sequence SRHPAAFRDL…ALRARGFGLR (93 aa).

Belongs to the phenylalanyl-tRNA synthetase beta subunit family. Type 1 subfamily. In terms of assembly, tetramer of two alpha and two beta subunits. Requires Mg(2+) as cofactor.

Its subcellular location is the cytoplasm. The catalysed reaction is tRNA(Phe) + L-phenylalanine + ATP = L-phenylalanyl-tRNA(Phe) + AMP + diphosphate + H(+). In Thermus thermophilus (strain ATCC 27634 / DSM 579 / HB8), this protein is Phenylalanine--tRNA ligase beta subunit (pheT).